Reading from the N-terminus, the 262-residue chain is 4-hydroxy-2-oxo-heptane-1,7-dioate aldolase (262 aa).

H45 acts as the Proton acceptor in catalysis. Q147 lines the substrate pocket. E149 is an a divalent metal cation binding site. Residues A174 and D175 each contribute to the substrate site. Position 175 (D175) interacts with a divalent metal cation.

It belongs to the HpcH/HpaI aldolase family. As to quaternary structure, homohexamer; trimer of dimers. It depends on a divalent metal cation as a cofactor.

The catalysed reaction is 4-hydroxy-2-oxoheptanedioate = succinate semialdehyde + pyruvate. The protein operates within aromatic compound metabolism; 4-hydroxyphenylacetate degradation; pyruvate and succinate semialdehyde from 4-hydroxyphenylacetate: step 7/7. In terms of biological role, catalyzes the reversible retro-aldol cleavage of 4-hydroxy-2-ketoheptane-1,7-dioate (HKHD) to pyruvate and succinic semialdehyde. This Shigella sonnei (strain Ss046) protein is 4-hydroxy-2-oxo-heptane-1,7-dioate aldolase.